Consider the following 352-residue polypeptide: C-C chemokine receptor type 5 (352 aa).

Over Met1 to Ala30 the chain is Extracellular. Tyr3 is modified (sulfotyrosine). Residues Ser6 and Ser7 are each glycosylated (O-linked (GalNAc...) serine). Sulfotyrosine occurs at positions 10, 14, and 15. Intrachain disulfides connect Cys20/Cys269 and Cys101/Cys178. The helical transmembrane segment at Arg31–Cys58 threads the bilayer. Topologically, residues Lys59–Tyr68 are cytoplasmic. A helical transmembrane segment spans residues Leu69 to Tyr89. Residues Ala90–Gln102 lie on the Extracellular side of the membrane. A helical membrane pass occupies residues Leu103 to Ile124. Over Asp125 to Thr141 the chain is Cytoplasmic. A helical transmembrane segment spans residues Val142 to Phe166. The Extracellular segment spans residues Thr167–Met198. Residues Val199–Leu218 traverse the membrane as a helical segment. Over Lys219–Arg235 the chain is Cytoplasmic. Residues Leu236–Phe260 form a helical membrane-spanning segment. Residues Gln261–Gln277 are Extracellular-facing. A helical membrane pass occupies residues Ala278–Gly301. Over Glu302 to Leu352 the chain is Cytoplasmic. 3 S-palmitoyl cysteine lipidation sites follow: Cys321, Cys323, and Cys324. Phosphoserine; by BARK1 occurs at positions 336, 337, 342, and 349.

This sequence belongs to the G-protein coupled receptor 1 family. In terms of assembly, interacts with PRAF2. Efficient ligand binding to CCL3/MIP-1alpha and CCL4/MIP-1beta requires sulfation, O-glycosylation and sialic acid modifications. Glycosylation on Ser-6 is required for efficient binding of CCL4. Interacts with GRK2. Interacts with ARRB1 and ARRB2. Interacts with CNIH4. Interacts with S100A4; this interaction stimulates T-lymphocyte chemotaxis. In terms of processing, sulfated on at least 2 of the N-terminal tyrosines. Sulfation is required for efficient binding of the chemokines, CCL3 and CCL4. Palmitoylation in the C-terminal is important for cell surface expression. Post-translationally, phosphorylation on serine residues in the C-terminal is stimulated by binding CC chemokines especially by APO-RANTES. In terms of processing, O-glycosylated, but not N-glycosylated. Ser-6 appears to be the major site even if Ser-7 may be also O-glycosylated. Also sialylated glycans present which contribute to chemokine binding. Thr-16 and Ser-17 may also be glycosylated and, if so, with small moieties such as a T-antigen.

It localises to the cell membrane. Its function is as follows. Receptor for a number of inflammatory CC-chemokines including CCL3/MIP-1-alpha, CCL4/MIP-1-beta and RANTES and subsequently transduces a signal by increasing the intracellular calcium ion level. May play a role in the control of granulocytic lineage proliferation or differentiation. Participates in T-lymphocyte migration to the infection site by acting as a chemotactic receptor. This Macaca fascicularis (Crab-eating macaque) protein is C-C chemokine receptor type 5 (CCR5).